The primary structure comprises 167 residues: Putative C-type lectin-like domain family 1 (167 aa).

At 1-67 (MVSNFFHVIQ…KYDCPFSGTS (67 aa)) the chain is on the cytoplasmic side. The chain crosses the membrane as a helical; Signal-anchor for type II membrane protein span at residues 68–88 (FVVFSLFLICAMAGDVVYADI). Residues 89-167 (KTVRTSPLEL…DITAMVRFNI (79 aa)) are Extracellular-facing. 3 N-linked (GlcNAc...) asparagine glycosylation sites follow: N109, N140, and N149. The C-type lectin; atypical domain maps to 116–167 (SCPAKDWKVHKGKCYWIAETKKSWNKSQNDCAINNSYLMVIQDITAMVRFNI).

Expressed in spleen, lymph node, and tonsil. Lower expression in peripheral blood, bone marrow, and colon. No expression detected in thymus. Highly expressed in dendritic and B-cells.

It localises to the cell membrane. In terms of biological role, may function in mediating immune cell-cell interactions. May act as a T-cell costimulatory molecule, enhancing anti-CD3-induced proliferation. May play a role in the interaction of dendritic cells with T-cells and the cells of the adaptive immune response. This Homo sapiens (Human) protein is Putative C-type lectin-like domain family 1.